Reading from the N-terminus, the 626-residue chain is UvrABC system protein C (626 aa).

The 80-residue stretch at 25 to 104 folds into the GIY-YIG domain; sequence TSPGVYRFSN…IKELKPRYNV (80 aa). Positions 218–253 constitute a UVR domain; that stretch reads SALLRDLSAEMQKKAKELKFEEAAALKAQIEGLKRY.

This sequence belongs to the UvrC family. Interacts with UvrB in an incision complex.

It localises to the cytoplasm. Functionally, the UvrABC repair system catalyzes the recognition and processing of DNA lesions. UvrC both incises the 5' and 3' sides of the lesion. The N-terminal half is responsible for the 3' incision and the C-terminal half is responsible for the 5' incision. In Chlorobaculum tepidum (strain ATCC 49652 / DSM 12025 / NBRC 103806 / TLS) (Chlorobium tepidum), this protein is UvrABC system protein C.